Consider the following 581-residue polypeptide: MKSHTQSLLAESLNALKQQGIVPADFEARIQVDRTKDKSHGDFATNLAMMLTKAAGKNPRELAQLLIDNLPESSHVEKVEIAGPGFINFFIDDNALANQLMAALNSDTLGIELPASQTVVVDYSSPNLAKEMHVGHLRSTIIGDSVVRALEFMGHKVIRQNHVGDWGTQFGMLLAYMEELRAANGEQAKMELSDLETFYRAAKVRFDESEEFATRARKLVVALQSGDEYCNKLWREFNDISLSHCHELYERLGVSLTRADVRGESAYNSDLAQVVADLDSQGLLSESNGAKVVFQDEFKNKEGEPLPVIIQKADGGYLYATSDLAAMRYRSNVLNADRALYFVDLRQALHFQQVFKLAKTAKFVREEMSFEHMGFGTMNGEDGRPFKTRSGGVVKLIDLLKEADIRALDLVRSKNPDMDEAELAEIARVVGIASVKYADLSKNRASDYIFSFEQMLSFEGNTAPYLLYAYTRVAGIFKRAQDVDLSDAKIILEHEKEKDLGTKLAQFGEVMARMVSKGQPHALCGYLFELAGAFSSFYEACPVLAAETEELKKSRLLLSQLTAKTLKQGLNLLGLETLERM.

The short motif at 126-136 (PNLAKEMHVGH) is the 'HIGH' region element.

Belongs to the class-I aminoacyl-tRNA synthetase family. As to quaternary structure, monomer.

It localises to the cytoplasm. The enzyme catalyses tRNA(Arg) + L-arginine + ATP = L-arginyl-tRNA(Arg) + AMP + diphosphate. The sequence is that of Arginine--tRNA ligase from Shewanella pealeana (strain ATCC 700345 / ANG-SQ1).